We begin with the raw amino-acid sequence, 521 residues long: Probable methylmalonate-semialdehyde/malonate-semialdehyde dehydrogenase [acylating], mitochondrial (521 aa).

NAD(+)-binding residues include Phe-172, Lys-196, Glu-199, Arg-200, and Ser-249. Catalysis depends on Cys-304, which acts as the Nucleophile. Glu-404 is a binding site for NAD(+).

Belongs to the aldehyde dehydrogenase family. Homotetramer.

The protein localises to the mitochondrion. The enzyme catalyses 2-methyl-3-oxopropanoate + NAD(+) + CoA + H2O = propanoyl-CoA + hydrogencarbonate + NADH + H(+). It carries out the reaction 3-oxopropanoate + NAD(+) + CoA + H2O = hydrogencarbonate + acetyl-CoA + NADH + H(+). Functionally, probable malonate and methylmalonate semialdehyde dehydrogenase involved in the catabolism of valine, thymine, and compounds catabolized by way of beta-alanine, including uracil and cytidine. This chain is Probable methylmalonate-semialdehyde/malonate-semialdehyde dehydrogenase [acylating], mitochondrial, found in Aedes aegypti (Yellowfever mosquito).